The following is a 328-amino-acid chain: Methionyl-tRNA formyltransferase (328 aa).

(6S)-5,6,7,8-tetrahydrofolate is bound at residue 110–113; the sequence is SLLP.

This sequence belongs to the Fmt family.

It catalyses the reaction L-methionyl-tRNA(fMet) + (6R)-10-formyltetrahydrofolate = N-formyl-L-methionyl-tRNA(fMet) + (6S)-5,6,7,8-tetrahydrofolate + H(+). Functionally, attaches a formyl group to the free amino group of methionyl-tRNA(fMet). The formyl group appears to play a dual role in the initiator identity of N-formylmethionyl-tRNA by promoting its recognition by IF2 and preventing the misappropriation of this tRNA by the elongation apparatus. This chain is Methionyl-tRNA formyltransferase, found in Prochlorococcus marinus (strain MIT 9515).